The primary structure comprises 1488 residues: Chromosome partition protein MukB (1488 aa).

34–41 (GGNGAGKS) is an ATP binding site. Coiled coils occupy residues 326 to 418 (LEAD…QYNQ), 444 to 472 (LDTF…QTAH), and 509 to 602 (RHLA…QRAP). Positions 666 to 783 (PGGAEDQRLN…SLPIFGRAAR (118 aa)) are flexible hinge. Coiled-coil stretches lie at residues 835 to 923 (EAEI…AKLE), 977 to 1116 (EMLS…AKAG), and 1209 to 1265 (VEAI…LQSV). A disordered region spans residues 1049 to 1074 (ADSGAEERARQRRDELHAQLSNNRSR). A compositionally biased stretch (basic and acidic residues) spans 1051–1065 (SGAEERARQRRDELH).

It belongs to the SMC family. MukB subfamily. In terms of assembly, homodimerization via its hinge domain. Binds to DNA via its C-terminal region. Interacts, and probably forms a ternary complex, with MukE and MukF via its C-terminal region. The complex formation is stimulated by calcium or magnesium. Interacts with tubulin-related protein FtsZ.

It is found in the cytoplasm. It localises to the nucleoid. In terms of biological role, plays a central role in chromosome condensation, segregation and cell cycle progression. Functions as a homodimer, which is essential for chromosome partition. Involved in negative DNA supercoiling in vivo, and by this means organize and compact chromosomes. May achieve or facilitate chromosome segregation by condensation DNA from both sides of a centrally located replisome during cell division. This is Chromosome partition protein MukB from Salmonella schwarzengrund (strain CVM19633).